Here is a 572-residue protein sequence, read N- to C-terminus: Mitochondrial distribution and morphology protein 34 (572 aa).

In terms of domain architecture, SMP-LTD spans 1-195; sequence MAFNFNWSPL…LPAIIHRLSL (195 aa). Disordered regions lie at residues 210–239, 330–423, and 455–482; these read TQAEKAETANGEGPGQDPLASPPQDPVDAL, SASI…PLSP, and RDMGGPSSTSDPATQATQSEDTSATPRA. The segment covering 330 to 347 has biased composition (polar residues); that stretch reads SASIASMQTRSSTPSHTF. A compositionally biased stretch (basic residues) spans 358–370; sequence RHSKAHSRKRKKR. A compositionally biased stretch (basic and acidic residues) spans 371–381; that stretch reads VVDLRRPKTTD. Polar residues-rich tracts occupy residues 387-400 and 460-480; these read SDESAFTESTSAPS and PSSTSDPATQATQSEDTSATP.

This sequence belongs to the MDM34 family. In terms of assembly, component of the ER-mitochondria encounter structure (ERMES) or MDM complex, composed of mmm1, mdm10, mdm12 and mdm34.

Its subcellular location is the mitochondrion outer membrane. Its function is as follows. Component of the ERMES/MDM complex, which serves as a molecular tether to connect the endoplasmic reticulum (ER) and mitochondria. Components of this complex are involved in the control of mitochondrial shape and protein biogenesis, and function in nonvesicular lipid trafficking between the ER and mitochondria. Mdm34 is required for the interaction of the ER-resident membrane protein mmm1 and the outer mitochondrial membrane-resident beta-barrel protein mdm10. In Aspergillus clavatus (strain ATCC 1007 / CBS 513.65 / DSM 816 / NCTC 3887 / NRRL 1 / QM 1276 / 107), this protein is Mitochondrial distribution and morphology protein 34.